A 732-amino-acid chain; its full sequence is MNRGYDSYNRSRSTSSRPLDREPYHAVSELYTKEITHTPIGPASDLPPEILDILKENPRATPQYTPPLIRHRENTWTPENYPIVRVPSAQFTDVMTELYDYHEVEKYTHRSVTPDYEPLRKEPELKEQKLPTYQVIPPTPEKNTPRHQHHSGITLSPSDSSRTLGALPKKPPMYEEYLQMQKKDENRNIPRQVSSADSQRTIRNNNELSHLRHIDSSSSSEASEPAKDLDDRERYVYTHDVYVDSTTGRPFTPGREDVREKKNCDKLKINVYFKPPHPPVEITYKLDEIEIEKNENIVVTKLRPSRSDTILSRSVSTSPSSVTDNIPKTSTSRIPSSENPKTMEHTTTSRRFPTQTSILRKEHEIVQVPLHRSQSLRQSRISEHSKRSLGKTTSTVSTERPIPIHVVEETSSIDMDVVFPKMPHHQTVTNVRVPSSRGSAISRAHSEHRRSIDRSEPRHHHRHHVHSETPELPYTRGISKTPSVREYNVKREGQRSPSRSHRSERSPSEVRIPVTTTHTRPIAKRQSPEELDYGRFADKSQQNRFPGDHQAREEDLPYTRGISKTPSNQDSRSERTPCSDIHIPYNNPEKERAYQQSERSSYRSHKSVTPSEKSLPRNSETPELHYTRGISKTPSDRVEKSRYLSRGVSTPHTPSEVHIPYNNPEKERAYQQSHRPSSPKRRPSGRTNSPNKSSSSSKARPSAAPLEEIVHIKERYERDETIRRFFPTTTAV.

Disordered regions lie at residues 1–24, 115–169, 181–232, 310–351, 372–397, and 426–708; these read MNRG…REPY, DYEP…ALPK, QKKD…LDDR, ILSR…TSRR, RSQS…STVS, and QTVT…PLEE. Residues 8–17 are compositionally biased toward polar residues; the sequence is YNRSRSTSSR. A compositionally biased stretch (basic and acidic residues) spans 117–129; sequence EPLRKEPELKEQK. Polar residues-rich tracts occupy residues 151–163 and 189–208; these read SGIT…SSRT and IPRQ…NNEL. Residues 312-323 are compositionally biased toward low complexity; that stretch reads SRSVSTSPSSVT. Residues 324 to 351 show a composition bias toward polar residues; that stretch reads DNIPKTSTSRIPSSENPKTMEHTTTSRR. Polar residues predominate over residues 426 to 439; sequence QTVTNVRVPSSRGS. 2 stretches are compositionally biased toward basic and acidic residues: residues 526–538 and 546–557; these read QSPE…RFAD and PGDHQAREEDLP. Residues 607–619 are compositionally biased toward polar residues; sequence SVTPSEKSLPRNS. Residues 688-705 show a composition bias toward low complexity; that stretch reads NSPNKSSSSSKARPSAAP.

As to quaternary structure, interacts with tax-6. Expressed in intestine.

This is Calcineurin-interacting protein 2 from Caenorhabditis elegans.